Reading from the N-terminus, the 240-residue chain is Orotidine 5'-phosphate decarboxylase (240 aa).

Substrate-binding positions include D15, K37, 64–73, T127, R188, Q197, G217, and R218; that span reads DLKYHDIPNT. The Proton donor role is filled by K66.

The protein belongs to the OMP decarboxylase family. Type 1 subfamily. As to quaternary structure, homodimer.

The enzyme catalyses orotidine 5'-phosphate + H(+) = UMP + CO2. Its pathway is pyrimidine metabolism; UMP biosynthesis via de novo pathway; UMP from orotate: step 2/2. In terms of biological role, catalyzes the decarboxylation of orotidine 5'-monophosphate (OMP) to uridine 5'-monophosphate (UMP). The sequence is that of Orotidine 5'-phosphate decarboxylase from Citrifermentans bemidjiense (strain ATCC BAA-1014 / DSM 16622 / JCM 12645 / Bem) (Geobacter bemidjiensis).